The sequence spans 1325 residues: Protein PHYTOCHROME-DEPENDENT LATE-FLOWERING (1325 aa).

Composition is skewed to polar residues over residues 313–331 (IGST…SVSG) and 504–515 (NFPQTSWNVNPG). Disordered stretches follow at residues 313–371 (IGST…MPGL), 462–558 (EPFE…EFSG), 593–616 (ANEA…NSLP), 852–875 (VAGQ…NSTQ), and 1160–1325 (QQQQ…GNNS). Positions 518–529 (IEKEPKKEEQFS) are enriched in basic and acidic residues. The span at 596-607 (AMQQRQHQAQMA) shows a compositional bias: low complexity. A compositionally biased stretch (polar residues) spans 863 to 875 (HGNTGNTPNNSTQ). The segment covering 1160–1224 (QQQQQQQLQQ…QQQATASPLQ (65 aa)) has biased composition (low complexity). Residues 1225-1239 (SVLSPPQVGSPSAGI) are compositionally biased toward polar residues. Residues 1240–1262 (TQQQLQQSSPQQMSQRTPMSPQQ) are compositionally biased toward low complexity. Polar residues-rich tracts occupy residues 1263-1286 (VNQR…TSNL) and 1293-1325 (PQLS…GNNS).

As to quaternary structure, component of a red light-dependent nuclear complex made of PHL, PHYB and CO. Interacts directly with PHYB and CO; CO binding requires the presence of PHYB. As to expression, mostly expressed in cotyledons and leaves, both in mesophyll and vasculature cells. Also present in roots, hypocotyls and shoot apices.

It localises to the nucleus. It is found in the nuclear body. The protein resides in the cytoplasmic granule. The protein localises to the cytoplasm. Functionally, triggers photoperiod-monitored flowering by repressing PHYB-dependent flowering negative regulation, probably through physical interactions with PHYB and CO. The chain is Protein PHYTOCHROME-DEPENDENT LATE-FLOWERING from Arabidopsis thaliana (Mouse-ear cress).